The primary structure comprises 173 residues: Small ribosomal subunit protein uS5 (173 aa).

Residues 17–80 (WQERVIQIRR…SDAKKHVVDV (64 aa)) enclose the S5 DRBM domain.

Belongs to the universal ribosomal protein uS5 family. Part of the 30S ribosomal subunit. Contacts proteins S4 and S8.

Functionally, with S4 and S12 plays an important role in translational accuracy. In terms of biological role, located at the back of the 30S subunit body where it stabilizes the conformation of the head with respect to the body. In Picosynechococcus sp. (strain ATCC 27264 / PCC 7002 / PR-6) (Agmenellum quadruplicatum), this protein is Small ribosomal subunit protein uS5.